Here is a 618-residue protein sequence, read N- to C-terminus: Kelch-like protein 40b (618 aa).

Positions 33 to 100 constitute a BTB domain; that stretch reads VDCVLKIKDK…LYTSNINVTE (68 aa). The 103-residue stretch at 135 to 237 folds into the BACK domain; sequence CLAIFRLGLM…PRDYFVKNVE (103 aa). Residues 264–284 show a composition bias toward basic and acidic residues; that stretch reads PELKKTKNKKSPSEEGQKKGD. The disordered stretch occupies residues 264–297; that stretch reads PELKKTKNKKSPSEEGQKKGDEEEVEEEEEQEER. A compositionally biased stretch (acidic residues) spans 285 to 295; it reads EEEVEEEEEQE. 5 Kelch repeats span residues 356–408, 409–458, 459–506, 508–553, and 555–608; these read QIFV…EAEN, FIFV…SHNE, MIYV…IHKN, IYVV…SVSG, and LYAV…VLGV.

Belongs to the KLHL40 family. As to quaternary structure, component of the BCR(KLHL40) E3 ubiquitin ligase complex. Expressed in skeletal muscle. Detected in the eye at much lower levels.

Its subcellular location is the cytoplasm. The protein localises to the myofibril. It is found in the sarcomere. The protein resides in the a band. It localises to the i band. Functionally, substrate-specific adapter of a BCR (BTB-CUL3-RBX1) E3 ubiquitin ligase complex. Required for skeletal muscle development. This chain is Kelch-like protein 40b (klhl40b), found in Danio rerio (Zebrafish).